A 110-amino-acid polypeptide reads, in one-letter code: Large ribosomal subunit protein uL22 (110 aa).

Belongs to the universal ribosomal protein uL22 family. As to quaternary structure, part of the 50S ribosomal subunit.

Its function is as follows. This protein binds specifically to 23S rRNA; its binding is stimulated by other ribosomal proteins, e.g. L4, L17, and L20. It is important during the early stages of 50S assembly. It makes multiple contacts with different domains of the 23S rRNA in the assembled 50S subunit and ribosome. In terms of biological role, the globular domain of the protein is located near the polypeptide exit tunnel on the outside of the subunit, while an extended beta-hairpin is found that lines the wall of the exit tunnel in the center of the 70S ribosome. The sequence is that of Large ribosomal subunit protein uL22 from Exiguobacterium sp. (strain ATCC BAA-1283 / AT1b).